The primary structure comprises 194 residues: RxLR effector protein Avh240 (194 aa).

Positions 1–23 are cleaved as a signal peptide; that stretch reads MRPYFTLLLALAFILACTNLVEA. The RxLR-dEER motif lies at 38 to 57; the sequence is RHLRTAVASVVDLPDDEDER. The segment at 58 to 108 is host plasma membrane-binding; it reads LLGYNTVQLWRMRRTANKLMNGKLTTQKEAALKKWMASQQDKFLAKWLKSS.

The protein belongs to the RxLR effector family. Homodimer. Interacts with host soybean aspartic protease AP1.

The protein localises to the secreted. Its subcellular location is the host cell membrane. Its function is as follows. Effector that suppresses plant defense responses during the early stages of pathogen infection. Suppresses cell death induced by effectors and PAMPs in plant hosts. Avh240 dimerizes and localizes at the plasma membrane to interfere with aspartic protease AP1 secretion, which presents an effective mechanism by which effector proteins suppress plant apoplastic immunity. The chain is RxLR effector protein Avh240 from Phytophthora sojae (Soybean stem and root rot agent).